The sequence spans 410 residues: Argininosuccinate synthase (410 aa).

8–16 contributes to the ATP binding site; that stretch reads AYSGGLDTS. Tyr-86 contacts L-citrulline. ATP is bound at residue Gly-116. L-aspartate is bound by residues Thr-118, Asn-122, and Asp-123. An L-citrulline-binding site is contributed by Asn-122. The L-citrulline site is built by Arg-126, Ser-174, Glu-259, and Tyr-271.

Belongs to the argininosuccinate synthase family. Type 1 subfamily. Homotetramer.

Its subcellular location is the cytoplasm. It carries out the reaction L-citrulline + L-aspartate + ATP = 2-(N(omega)-L-arginino)succinate + AMP + diphosphate + H(+). It participates in amino-acid biosynthesis; L-arginine biosynthesis; L-arginine from L-ornithine and carbamoyl phosphate: step 2/3. In Leuconostoc citreum (strain KM20), this protein is Argininosuccinate synthase.